A 199-amino-acid chain; its full sequence is MASDFWLIAGLGNPGKKYEDTRHNMGFMTADVLAERWTVNFADHKGLAMLGKSVMNLDGRTVKFFLAKPLTYMNDSGNAVASISAYYQIEPDHIVVIHDDMDLEFGRIKVKAGGSAGGHNGIKSIDRSLGTPKYARVRMGVGHSKRGANAHDNTVNWVLGGFGPDQRKQLPEFLADGADAAEDIIFHGLAKTQEKFNGR.

Tyrosine 18 contributes to the tRNA binding site. The active-site Proton acceptor is histidine 23. Residues tyrosine 72, asparagine 74, and asparagine 120 each coordinate tRNA.

The protein belongs to the PTH family. In terms of assembly, monomer.

It is found in the cytoplasm. It catalyses the reaction an N-acyl-L-alpha-aminoacyl-tRNA + H2O = an N-acyl-L-amino acid + a tRNA + H(+). Hydrolyzes ribosome-free peptidyl-tRNAs (with 1 or more amino acids incorporated), which drop off the ribosome during protein synthesis, or as a result of ribosome stalling. Functionally, catalyzes the release of premature peptidyl moieties from peptidyl-tRNA molecules trapped in stalled 50S ribosomal subunits, and thus maintains levels of free tRNAs and 50S ribosomes. The chain is Peptidyl-tRNA hydrolase from Bifidobacterium longum (strain DJO10A).